The chain runs to 797 residues: Xaa-Pro dipeptidyl-peptidase (797 aa).

Active-site charge relay system residues include Ser-370, Asp-490, and His-521.

It belongs to the peptidase S15 family. In terms of assembly, homodimer.

It localises to the cytoplasm. It carries out the reaction Hydrolyzes Xaa-Pro-|- bonds to release unblocked, N-terminal dipeptides from substrates including Ala-Pro-|-p-nitroanilide and (sequentially) Tyr-Pro-|-Phe-Pro-|-Gly-Pro-|-Ile.. Removes N-terminal dipeptides sequentially from polypeptides having unsubstituted N-termini provided that the penultimate residue is proline. This Lacticaseibacillus casei (strain BL23) (Lactobacillus casei) protein is Xaa-Pro dipeptidyl-peptidase.